Consider the following 273-residue polypeptide: Hydroxyethylthiazole kinase (273 aa).

Substrate is bound at residue Met-49. Positions 125 and 171 each coordinate ATP. Gly-198 is a binding site for substrate.

This sequence belongs to the Thz kinase family. It depends on Mg(2+) as a cofactor.

The enzyme catalyses 5-(2-hydroxyethyl)-4-methylthiazole + ATP = 4-methyl-5-(2-phosphooxyethyl)-thiazole + ADP + H(+). Its pathway is cofactor biosynthesis; thiamine diphosphate biosynthesis; 4-methyl-5-(2-phosphoethyl)-thiazole from 5-(2-hydroxyethyl)-4-methylthiazole: step 1/1. In terms of biological role, catalyzes the phosphorylation of the hydroxyl group of 4-methyl-5-beta-hydroxyethylthiazole (THZ). This chain is Hydroxyethylthiazole kinase, found in Desulforudis audaxviator (strain MP104C).